Reading from the N-terminus, the 64-residue chain is KDGYLVGNDGCKYSCFTRPGTYCANECSRVKGKDGYCYAWMACYCYSMPNWVKTWNRATNRCGR.

The LCN-type CS-alpha/beta domain maps to 1 to 63 (KDGYLVGNDG…TWNRATNRCG (63 aa)). 4 cysteine pairs are disulfide-bonded: cysteine 11–cysteine 62, cysteine 15–cysteine 37, cysteine 23–cysteine 43, and cysteine 27–cysteine 45.

This sequence belongs to the long (4 C-C) scorpion toxin superfamily. Sodium channel inhibitor family. Beta subfamily. Expressed by the venom gland.

It localises to the secreted. In terms of biological role, shows antibacterial activity against both Gram-positive bacteria (B.subtilis, M.luteus, E.faecalis) and Gram-negative bacteria (P.aeruginosa, Y.enterocolitica, A.calcoaceticus). Modifies membrane sodium permeability on Y.enterocolitica. Is toxic to mice, but is not to crabs. Induces concentration dependent haemolysis in human erythrocytes. Acts by inhibiting the sodium (Nav) currents. The chain is Bactridin-2 from Tityus discrepans (Venezuelan scorpion).